The sequence spans 353 residues: Rhodopsin (353 aa).

The Extracellular segment spans residues 1-36; it reads MNGTEGPFFYVPMLNTTGIVRSPYDYPQYYLVNPAA. Residues Asn-2 and Asn-15 are each glycosylated (N-linked (GlcNAc...) asparagine). Residues 37–61 form a helical membrane-spanning segment; that stretch reads YAALGAYMFLLILLGFPINFLTLYV. The Cytoplasmic portion of the chain corresponds to 62 to 73; that stretch reads TIEHKKLRTPLN. A helical transmembrane segment spans residues 74–96; it reads YILLNLAVANLFMVFGGFTTTMY. Topologically, residues 97–110 are extracellular; it reads TSMHGYFVLGRLGC. The cysteines at positions 110 and 187 are disulfide-linked. The helical transmembrane segment at 111-133 threads the bilayer; it reads NLEGFFATLGGEIGLWSLVVLAI. Residues 134–136 carry the 'Ionic lock' involved in activated form stabilization motif; sequence ERW. Topologically, residues 134 to 152 are cytoplasmic; it reads ERWMVVCKPISNFRFGENH. Residues 153–173 form a helical membrane-spanning segment; it reads AIMGLAFTWIMACACAVPPLV. The Extracellular segment spans residues 174–202; sequence GWSRYIPEGMQCSCGVDYYTRAEGFNNES. Asn-200 carries N-linked (GlcNAc...) asparagine glycosylation. Residues 203-224 traverse the membrane as a helical segment; that stretch reads FVVYMFICHFLIPMAVVFFCYG. Over 225-252 the chain is Cytoplasmic; that stretch reads RLLCAVKEAAAAQQESETTQRAEREVTR. A helical transmembrane segment spans residues 253-274; that stretch reads MVVIMVVAFLICWLPYAGVAWW. The Extracellular segment spans residues 275-286; that stretch reads IFTHQGSEFGPV. The chain crosses the membrane as a helical span at residues 287 to 308; sequence FMTIPAFFAKSSSIYNPLIYIC. Lys-296 carries the post-translational modification N6-(retinylidene)lysine. The Cytoplasmic segment spans residues 309–353; the sequence is MNKQFRHCMITTLCCGKNPFEEEEGASTTSKTEASSVSSSSVSPA. Residues Cys-322 and Cys-323 are each lipidated (S-palmitoyl cysteine). Residues 330-353 are disordered; it reads EEEGASTTSKTEASSVSSSSVSPA. Low complexity predominate over residues 334–353; sequence ASTTSKTEASSVSSSSVSPA.

It belongs to the G-protein coupled receptor 1 family. Opsin subfamily. In terms of processing, phosphorylated on some or all of the serine and threonine residues present in the C-terminal region. Contains one covalently linked retinal chromophore.

Its subcellular location is the membrane. It localises to the cell projection. The protein resides in the cilium. The protein localises to the photoreceptor outer segment. Photoreceptor required for image-forming vision at low light intensity. While most salt water fish species use retinal as chromophore, most freshwater fish use 3-dehydroretinal, or a mixture of retinal and 3-dehydroretinal. Light-induced isomerization of 11-cis to all-trans retinal triggers a conformational change that activates signaling via G-proteins. Subsequent receptor phosphorylation mediates displacement of the bound G-protein alpha subunit by arrestin and terminates signaling. This Tetraodon nigroviridis (Spotted green pufferfish) protein is Rhodopsin (rho).